The chain runs to 132 residues: Large-conductance mechanosensitive channel (132 aa).

The next 3 membrane-spanning stretches (helical) occupy residues 14–34 (VLDM…VDSL), 39–59 (INPI…AVTI), and 68–88 (IGNF…VFLI).

The protein belongs to the MscL family. Homopentamer.

It localises to the cell membrane. Channel that opens in response to stretch forces in the membrane lipid bilayer. May participate in the regulation of osmotic pressure changes within the cell. This chain is Large-conductance mechanosensitive channel, found in Latilactobacillus sakei subsp. sakei (strain 23K) (Lactobacillus sakei subsp. sakei).